The chain runs to 87 residues: MANIKSAKKRAVQSEKARKHNASRRSMMRTFIKKVYAAIEAGDKAAALKAFNEMQPIVDRQAVKGLIHKNKAARHKANLTAQINKLA.

The interval 1–26 (MANIKSAKKRAVQSEKARKHNASRRS) is disordered.

This sequence belongs to the bacterial ribosomal protein bS20 family.

Its function is as follows. Binds directly to 16S ribosomal RNA. This Salmonella gallinarum (strain 287/91 / NCTC 13346) protein is Small ribosomal subunit protein bS20.